Here is a 337-residue protein sequence, read N- to C-terminus: MDKMRILKESRPEIIVGGKYRVIRKIGSGSFGDIYLGMSIQSGEEVAIKMESAHARHPQLLYEAKLYRILSGGVGFPRIRHHGKEKNFNTLVMDLLGPSLEDLFNFCTRHFTIKTVLMLVDQMIGRLEYIHLKCFIHRDIKPDNFLMGIGRHCNKLFLIDFGLAKKFRDPHTRHHIVYREDKNLTGTARYASINAHLGIEQSRRDDMESLGYVMMYFNRGVLPWQGMKANTKQQKYEKISEKKMSTPIEVLCKGSPAEFSMYLNYCRSLRFEEQPDYMYLRQLFRILFRTLNHQYDYIYDWTMLKQKTHQGQPNPAILLEQLDKDKEKQNGKPLIAD.

One can recognise a Protein kinase domain in the interval 20-288 (YRVIRKIGSG…YLRQLFRILF (269 aa)). ATP-binding positions include 26 to 34 (IGSGSFGDI) and lysine 49. Catalysis depends on aspartate 139, which acts as the Proton acceptor.

Belongs to the protein kinase superfamily. CK1 Ser/Thr protein kinase family. Casein kinase I subfamily. In terms of assembly, interacts with cos. It depends on Mg(2+) as a cofactor. Post-translationally, phosphorylated. The dephosphorylated kinase is active in the cytoplasm while the active kinase in the nucleus is phosphorylated.

The protein resides in the cytoplasm. It localises to the nucleus. The enzyme catalyses L-seryl-[protein] + ATP = O-phospho-L-seryl-[protein] + ADP + H(+). It catalyses the reaction L-threonyl-[protein] + ATP = O-phospho-L-threonyl-[protein] + ADP + H(+). Activity increases following DNA damage. Its function is as follows. Casein kinases are operationally defined by their preferential utilization of acidic proteins such as caseins as substrates. Can phosphorylate a large number of proteins. Negative regulator of wg signaling. Phosphorylates arm directly or indirectly and stimulates its degradation which prevents inappropriate wg signaling. Phosphorylates smo which promotes its accumulation at the cell surface and its signaling activity in response to hh. Together with dco, regulates proteolytic processing of ci by phosphorylating it, which promotes its binding to slmb, the F-box recognition component of the SCF(slmb) E3 ubiquitin-protein ligase required for ci processing. Inhibits condensin II interphase activity by promoting degradation of the Cap-H2 regulatory subunit and limiting the levels of chromatin-bound Cap-H2 which regulates interphase chromosome organization. The protein is Casein kinase I isoform alpha (CkIalpha) of Drosophila melanogaster (Fruit fly).